Here is a 405-residue protein sequence, read N- to C-terminus: Glucose-1-phosphate adenylyltransferase (405 aa).

Alpha-D-glucose 1-phosphate contacts are provided by residues Y99, G164, 179-180 (EK), and S197.

It belongs to the bacterial/plant glucose-1-phosphate adenylyltransferase family. As to quaternary structure, homotetramer.

It carries out the reaction alpha-D-glucose 1-phosphate + ATP + H(+) = ADP-alpha-D-glucose + diphosphate. Its pathway is glycan biosynthesis; glycogen biosynthesis. Functionally, involved in the biosynthesis of ADP-glucose, a building block required for the elongation reactions to produce glycogen. Catalyzes the reaction between ATP and alpha-D-glucose 1-phosphate (G1P) to produce pyrophosphate and ADP-Glc. The protein is Glucose-1-phosphate adenylyltransferase of Corynebacterium aurimucosum (strain ATCC 700975 / DSM 44827 / CIP 107346 / CN-1) (Corynebacterium nigricans).